Here is a 166-residue protein sequence, read N- to C-terminus: Ribosome maturation factor RimP (166 aa).

Belongs to the RimP family.

It is found in the cytoplasm. Its function is as follows. Required for maturation of 30S ribosomal subunits. This chain is Ribosome maturation factor RimP, found in Rickettsia akari (strain Hartford).